A 131-amino-acid polypeptide reads, in one-letter code: Phosphoribosyl-AMP cyclohydrolase (131 aa).

Mg(2+) is bound at residue D89. Zn(2+) is bound at residue C90. The Mg(2+) site is built by D91 and D93. The Zn(2+) site is built by C106 and C113.

It belongs to the PRA-CH family. As to quaternary structure, homodimer. Requires Mg(2+) as cofactor. It depends on Zn(2+) as a cofactor.

Its subcellular location is the cytoplasm. It carries out the reaction 1-(5-phospho-beta-D-ribosyl)-5'-AMP + H2O = 1-(5-phospho-beta-D-ribosyl)-5-[(5-phospho-beta-D-ribosylamino)methylideneamino]imidazole-4-carboxamide. It functions in the pathway amino-acid biosynthesis; L-histidine biosynthesis; L-histidine from 5-phospho-alpha-D-ribose 1-diphosphate: step 3/9. In terms of biological role, catalyzes the hydrolysis of the adenine ring of phosphoribosyl-AMP. This Bifidobacterium longum (strain DJO10A) protein is Phosphoribosyl-AMP cyclohydrolase.